A 193-amino-acid chain; its full sequence is Imidazoleglycerol-phosphate dehydratase (193 aa).

Belongs to the imidazoleglycerol-phosphate dehydratase family.

It is found in the cytoplasm. The catalysed reaction is D-erythro-1-(imidazol-4-yl)glycerol 3-phosphate = 3-(imidazol-4-yl)-2-oxopropyl phosphate + H2O. It functions in the pathway amino-acid biosynthesis; L-histidine biosynthesis; L-histidine from 5-phospho-alpha-D-ribose 1-diphosphate: step 6/9. This chain is Imidazoleglycerol-phosphate dehydratase, found in Methanoculleus marisnigri (strain ATCC 35101 / DSM 1498 / JR1).